A 116-amino-acid chain; its full sequence is uncharacterized protein (116 aa).

A run of 3 helical transmembrane segments spans residues 5–27 (AILLSLAGIADSSYLLLSEAVPC), 42–64 (PFVPALLGLCWFVLSIVVFTAGV), and 88–110 (VLHGYFCPYCFTAYGIGIVVVAI).

It is found in the cell membrane. This is an uncharacterized protein from Archaeoglobus fulgidus (strain ATCC 49558 / DSM 4304 / JCM 9628 / NBRC 100126 / VC-16).